Reading from the N-terminus, the 366-residue chain is S-adenosylmethionine:tRNA ribosyltransferase-isomerase (366 aa).

The protein belongs to the QueA family. As to quaternary structure, monomer.

Its subcellular location is the cytoplasm. It catalyses the reaction 7-aminomethyl-7-carbaguanosine(34) in tRNA + S-adenosyl-L-methionine = epoxyqueuosine(34) in tRNA + adenine + L-methionine + 2 H(+). The protein operates within tRNA modification; tRNA-queuosine biosynthesis. In terms of biological role, transfers and isomerizes the ribose moiety from AdoMet to the 7-aminomethyl group of 7-deazaguanine (preQ1-tRNA) to give epoxyqueuosine (oQ-tRNA). This chain is S-adenosylmethionine:tRNA ribosyltransferase-isomerase, found in Parasynechococcus marenigrum (strain WH8102).